Here is a 498-residue protein sequence, read N- to C-terminus: Glycerol kinase (498 aa).

ADP is bound at residue Thr-12. Residues Thr-12, Thr-13, and Ser-14 each contribute to the ATP site. Position 12 (Thr-12) interacts with sn-glycerol 3-phosphate. Arg-16 is a binding site for ADP. Sn-glycerol 3-phosphate is bound by residues Arg-82, Tyr-134, and Asp-243. Glycerol is bound by residues Arg-82, Tyr-134, Asp-243, and Gln-244. Residues Thr-265 and Gly-308 each contribute to the ADP site. Residues Thr-265, Gly-308, Gln-312, and Gly-411 each coordinate ATP. Gly-411 is an ADP binding site.

It belongs to the FGGY kinase family.

It catalyses the reaction glycerol + ATP = sn-glycerol 3-phosphate + ADP + H(+). The protein operates within polyol metabolism; glycerol degradation via glycerol kinase pathway; sn-glycerol 3-phosphate from glycerol: step 1/1. Its activity is regulated as follows. Inhibited by fructose 1,6-bisphosphate (FBP). Its function is as follows. Key enzyme in the regulation of glycerol uptake and metabolism. Catalyzes the phosphorylation of glycerol to yield sn-glycerol 3-phosphate. The sequence is that of Glycerol kinase from Brucella suis (strain ATCC 23445 / NCTC 10510).